The sequence spans 240 residues: MLTLGVNIDHVATIRQARRTVEPDPVAAAVLAEIGGADGITVHLREDRRHIQDRDVRILRQTVRTHLNLEMAPTEEMIAIALDIKPDYVTLVPEKRQEVTTEGGIDMLGNFDRFCRVVERLQAANIPVSWFIDADFAQIQAAANTGAKFIELHTGQYAEAQQESDRQALLTILKEGCEYASSLGLRVNAGHGLTYGNVYAVACLPNMEELNIGHTIISRAVLVGLERAVREMKLAMRGQL.

Asparagine 7 lines the 3-amino-2-oxopropyl phosphate pocket. A 1-deoxy-D-xylulose 5-phosphate-binding site is contributed by 9-10 (DH). Arginine 18 serves as a coordination point for 3-amino-2-oxopropyl phosphate. Histidine 43 acts as the Proton acceptor in catalysis. Residues arginine 45 and histidine 50 each contribute to the 1-deoxy-D-xylulose 5-phosphate site. The active-site Proton acceptor is glutamate 70. Threonine 100 lines the 1-deoxy-D-xylulose 5-phosphate pocket. Catalysis depends on histidine 191, which acts as the Proton donor. 3-amino-2-oxopropyl phosphate-binding positions include glycine 192 and 213–214 (GH).

The protein belongs to the PNP synthase family. As to quaternary structure, homooctamer; tetramer of dimers.

Its subcellular location is the cytoplasm. The catalysed reaction is 3-amino-2-oxopropyl phosphate + 1-deoxy-D-xylulose 5-phosphate = pyridoxine 5'-phosphate + phosphate + 2 H2O + H(+). Its pathway is cofactor biosynthesis; pyridoxine 5'-phosphate biosynthesis; pyridoxine 5'-phosphate from D-erythrose 4-phosphate: step 5/5. Its function is as follows. Catalyzes the complicated ring closure reaction between the two acyclic compounds 1-deoxy-D-xylulose-5-phosphate (DXP) and 3-amino-2-oxopropyl phosphate (1-amino-acetone-3-phosphate or AAP) to form pyridoxine 5'-phosphate (PNP) and inorganic phosphate. The protein is Pyridoxine 5'-phosphate synthase of Microcystis aeruginosa (strain NIES-843 / IAM M-2473).